Here is a 283-residue protein sequence, read N- to C-terminus: 4-hydroxy-3-methylbut-2-enyl diphosphate reductase (283 aa).

C12 is a binding site for [4Fe-4S] cluster. (2E)-4-hydroxy-3-methylbut-2-enyl diphosphate-binding residues include H40 and H72. Positions 40 and 72 each coordinate dimethylallyl diphosphate. H40 and H72 together coordinate isopentenyl diphosphate. [4Fe-4S] cluster is bound at residue C94. (2E)-4-hydroxy-3-methylbut-2-enyl diphosphate is bound at residue H122. H122 provides a ligand contact to dimethylallyl diphosphate. An isopentenyl diphosphate-binding site is contributed by H122. E124 acts as the Proton donor in catalysis. T160 contacts (2E)-4-hydroxy-3-methylbut-2-enyl diphosphate. C188 provides a ligand contact to [4Fe-4S] cluster. (2E)-4-hydroxy-3-methylbut-2-enyl diphosphate-binding residues include S216, N218, and S259. Dimethylallyl diphosphate is bound by residues S216, N218, and S259. Isopentenyl diphosphate-binding residues include S216, N218, and S259.

It belongs to the IspH family. The cofactor is [4Fe-4S] cluster.

The catalysed reaction is isopentenyl diphosphate + 2 oxidized [2Fe-2S]-[ferredoxin] + H2O = (2E)-4-hydroxy-3-methylbut-2-enyl diphosphate + 2 reduced [2Fe-2S]-[ferredoxin] + 2 H(+). The enzyme catalyses dimethylallyl diphosphate + 2 oxidized [2Fe-2S]-[ferredoxin] + H2O = (2E)-4-hydroxy-3-methylbut-2-enyl diphosphate + 2 reduced [2Fe-2S]-[ferredoxin] + 2 H(+). It functions in the pathway isoprenoid biosynthesis; dimethylallyl diphosphate biosynthesis; dimethylallyl diphosphate from (2E)-4-hydroxy-3-methylbutenyl diphosphate: step 1/1. The protein operates within isoprenoid biosynthesis; isopentenyl diphosphate biosynthesis via DXP pathway; isopentenyl diphosphate from 1-deoxy-D-xylulose 5-phosphate: step 6/6. Catalyzes the conversion of 1-hydroxy-2-methyl-2-(E)-butenyl 4-diphosphate (HMBPP) into a mixture of isopentenyl diphosphate (IPP) and dimethylallyl diphosphate (DMAPP). Acts in the terminal step of the DOXP/MEP pathway for isoprenoid precursor biosynthesis. The protein is 4-hydroxy-3-methylbut-2-enyl diphosphate reductase of Dictyoglomus turgidum (strain DSM 6724 / Z-1310).